Reading from the N-terminus, the 79-residue chain is Probable [Fe-S]-dependent transcriptional repressor (79 aa).

Residues Cys-56, Cys-61, Cys-64, and Cys-70 each contribute to the iron-sulfur cluster site.

It belongs to the FeoC family.

Its function is as follows. May function as a transcriptional regulator that controls feoABC expression. This Serratia proteamaculans (strain 568) protein is Probable [Fe-S]-dependent transcriptional repressor.